The following is a 262-amino-acid chain: Carboxy-S-adenosyl-L-methionine synthase (262 aa).

Residues Tyr50, Gly84 to Ser86, Asp137 to Ile138, Asn152, and Arg219 contribute to the S-adenosyl-L-methionine site.

It belongs to the class I-like SAM-binding methyltransferase superfamily. Cx-SAM synthase family. As to quaternary structure, homodimer.

It catalyses the reaction prephenate + S-adenosyl-L-methionine = carboxy-S-adenosyl-L-methionine + 3-phenylpyruvate + H2O. Catalyzes the conversion of S-adenosyl-L-methionine (SAM) to carboxy-S-adenosyl-L-methionine (Cx-SAM). This is Carboxy-S-adenosyl-L-methionine synthase from Psychrobacter arcticus (strain DSM 17307 / VKM B-2377 / 273-4).